Here is a 212-residue protein sequence, read N- to C-terminus: Thymidylate kinase (212 aa).

Residue 10–17 (GPEGAGKT) coordinates ATP.

The protein belongs to the thymidylate kinase family.

It carries out the reaction dTMP + ATP = dTDP + ADP. Phosphorylation of dTMP to form dTDP in both de novo and salvage pathways of dTTP synthesis. This is Thymidylate kinase from Bacillus pumilus (strain SAFR-032).